The following is a 783-amino-acid chain: Aconitate hydratase, mitochondrial (783 aa).

The N-terminal 25 residues, M1 to M25, are a transit peptide targeting the mitochondrion. Substrate contacts are provided by residues Q102 and D195–H197. 3 residues coordinate [4Fe-4S] cluster: C388, C451, and C454. Substrate is bound by residues R477 and R482. Residues E524–S555 form a disordered region. Residues R610 and S673–R674 each bind substrate.

This sequence belongs to the aconitase/IPM isomerase family. It depends on [4Fe-4S] cluster as a cofactor.

It is found in the mitochondrion. It carries out the reaction citrate = D-threo-isocitrate. The catalysed reaction is (2R)-homocitrate = cis-homoaconitate + H2O. It participates in carbohydrate metabolism; tricarboxylic acid cycle; isocitrate from oxaloacetate: step 2/2. Its pathway is amino-acid biosynthesis; L-lysine biosynthesis via AAA pathway; L-alpha-aminoadipate from 2-oxoglutarate: step 2/5. Functionally, catalyzes the isomerization of citrate to isocitrate via cis-aconitate, a step in the citric acid cycle. Also catalyzes the reversible dehydration of (R)-homocitrate to cis-homoaconitate, a step in the alpha-aminoadipate pathway for lysine biosynthesis. The chain is Aconitate hydratase, mitochondrial (acoA) from Emericella nidulans (strain FGSC A4 / ATCC 38163 / CBS 112.46 / NRRL 194 / M139) (Aspergillus nidulans).